The following is a 782-amino-acid chain: uncharacterized protein (782 aa).

Disordered stretches follow at residues 1–25 (MFSP…STTS) and 175–195 (RPRT…EDLR). Low complexity predominate over residues 13–25 (ESESVSNCESTTS). Over residues 183 to 195 (RAGDASMSREDLR) the composition is skewed to basic and acidic residues. Coiled coils occupy residues 223–331 (RENR…STLN), 348–398 (LSQF…VSTL), 428–601 (NRIN…QLLN), and 699–743 (TIET…IIAK). The segment at 748 to 782 (NIPKTEKSSPMKKVPPIENFRAKSQTSITGLSPVL) is disordered. The span at 769 to 782 (AKSQTSITGLSPVL) shows a compositional bias: polar residues.

This is an uncharacterized protein from Caenorhabditis elegans.